Here is a 235-residue protein sequence, read N- to C-terminus: Ribonuclease HII (235 aa).

Residues 23–212 (GLVAGVDEAG…VAHVVSIARM (190 aa)) enclose the RNase H type-2 domain. Aspartate 29, glutamate 30, and aspartate 121 together coordinate a divalent metal cation.

This sequence belongs to the RNase HII family. Mn(2+) is required as a cofactor. Requires Mg(2+) as cofactor.

It localises to the cytoplasm. The catalysed reaction is Endonucleolytic cleavage to 5'-phosphomonoester.. In terms of biological role, endonuclease that specifically degrades the RNA of RNA-DNA hybrids. The polypeptide is Ribonuclease HII (Delftia acidovorans (strain DSM 14801 / SPH-1)).